A 132-amino-acid polypeptide reads, in one-letter code: Dinoflagellate viral nucleoprotein 5 (132 aa).

Over residues 1–44 (MAAMKKAMKVKKSAKKSAKKSGKKGGMKKKAKRVSKVARGKRAK) the composition is skewed to basic residues. Residues 1-84 (MAAMKKAMKV…KKQSEHGKKI (84 aa)) form a disordered region. Residues 57–66 (GGLTKNSLVK) show a composition bias toward polar residues.

In terms of processing, phosphorylated.

The protein localises to the nucleus. It localises to the chromosome. Its function is as follows. DNA-binding protein, which similarly to histones, may compact DNA into chromatin. This is Dinoflagellate viral nucleoprotein 5 from Hematodinium sp.